The primary structure comprises 502 residues: MSSFLHDSPVLEAPPIPFDNSYARLPPQFFAEQAPTPVAAPRLIKFNSVLASELGLDAEVLERDGAAIFSGNALLPGSQPLAMAYAGHQFGGFVPQLGDGRAILLGEVIDRNGRRRDIQLKGAGPTPFSRRGDGRAALGPVLREYIVSEAMFALGIPTTRALAAVTTGQPVYREEALPGAVFTRVAASHIRVGTFQYFAARGDTDSLRILADYVVDRHYPEIKDRKNRYLALLDAVADRQAALIARWLHVGFIHGVMNTDNMTISGETIDFGPCAFMDAYDPATVFSSIDRQGRYAYANQPAIGQWNLARLGETLLPLIDPTLDTAVELANGIIKAYGERFQTYWLAGMRAKIGLATEEDSDLDLVQSLLAVMQEQEADFTLTFRRLGVLAASVDNEAAFAASFKDPLSVAPWLSLWRERLGRDPQSPAARAKAMLGVNPAFVPRNHRIEQAIAAAVEEDDFSLFEALLAVLAKPYEDQPAFAPYAEPPRPAERVLQTFCGT.

Gly-98, Gly-100, Arg-101, Lys-121, Asp-133, Gly-134, Arg-184, and Arg-191 together coordinate ATP. Asp-260 serves as the catalytic Proton acceptor. 2 residues coordinate Mg(2+): Asn-261 and Asp-270. Asp-270 provides a ligand contact to ATP.

Belongs to the SELO family. Mg(2+) serves as cofactor. The cofactor is Mn(2+).

It carries out the reaction L-seryl-[protein] + ATP = 3-O-(5'-adenylyl)-L-seryl-[protein] + diphosphate. The catalysed reaction is L-threonyl-[protein] + ATP = 3-O-(5'-adenylyl)-L-threonyl-[protein] + diphosphate. It catalyses the reaction L-tyrosyl-[protein] + ATP = O-(5'-adenylyl)-L-tyrosyl-[protein] + diphosphate. The enzyme catalyses L-histidyl-[protein] + UTP = N(tele)-(5'-uridylyl)-L-histidyl-[protein] + diphosphate. It carries out the reaction L-seryl-[protein] + UTP = O-(5'-uridylyl)-L-seryl-[protein] + diphosphate. The catalysed reaction is L-tyrosyl-[protein] + UTP = O-(5'-uridylyl)-L-tyrosyl-[protein] + diphosphate. In terms of biological role, nucleotidyltransferase involved in the post-translational modification of proteins. It can catalyze the addition of adenosine monophosphate (AMP) or uridine monophosphate (UMP) to a protein, resulting in modifications known as AMPylation and UMPylation. The polypeptide is Protein nucleotidyltransferase YdiU (Rhizobium rhizogenes (strain K84 / ATCC BAA-868) (Agrobacterium radiobacter)).